The chain runs to 692 residues: MAREFSLKDTRNIGIMAHIDAGKTTTTERILFYTGRVHKIGETHEGASQMDWMEQEQERGITITSAATTAQWKGHRINIIDTPGHVDFTVEVERSLRVLDGAVAVLDAQSGVEPQTETVWRQATTYGVPRIVFINKMDKTGADFMYSVSTLRDRLQANAHPIQLPIGAEDDFVGFVDLIEMQAHISKDDLGQDWEVTEVPADYKDEAESLRESLVEAVAELDEDLMMKYLEGEELTKDELKAAIRKGTCNVEFYPVVCGTAFKNKGVQALLDAVLDYLPSPLDVAAIRGQVPGTDEEVTREPGDDQPFAALAFKVMTDPFVGKLTFFRVYSGTLNSGSYVRNATKDKRERIGRILQMHANSREEISTVYSGDIAAAVGLKDTTTGDTLCDEKNLVILESMEFPEPVIHLSVEPKSKADQDKMGIALAKLAEEDPTFKTFTDEETGETVIGGMGELHLDIIVDRLRREFKVEANVGAPQVSYRETIRTAAQVEGKFVRQSGGRGQFGHVWVEFSPNEEGAGFEFENAIVGGVVPREYIPSVQAGIEEALQNGMIAGYPVIDIKAKLYDGSYHDVDSSEMAFKIAASMALKNAKSKCDPVLLEPISKVEIVVPEEYMGDIMGDVTARRGRVEGMEARGNAQVVKAFVPLAEMFGYATSLRSRTQGRGTYSMVFDHYEEVPKSIAEEIIKKQTGA.

One can recognise a tr-type G domain in the interval 8 to 282 (KDTRNIGIMA…AVLDYLPSPL (275 aa)). Residues 17 to 24 (AHIDAGKT), 81 to 85 (DTPGH), and 135 to 138 (NKMD) contribute to the GTP site.

Belongs to the TRAFAC class translation factor GTPase superfamily. Classic translation factor GTPase family. EF-G/EF-2 subfamily.

The protein resides in the cytoplasm. Its function is as follows. Catalyzes the GTP-dependent ribosomal translocation step during translation elongation. During this step, the ribosome changes from the pre-translocational (PRE) to the post-translocational (POST) state as the newly formed A-site-bound peptidyl-tRNA and P-site-bound deacylated tRNA move to the P and E sites, respectively. Catalyzes the coordinated movement of the two tRNA molecules, the mRNA and conformational changes in the ribosome. This is Elongation factor G from Shouchella clausii (strain KSM-K16) (Alkalihalobacillus clausii).